The primary structure comprises 529 residues: Sodium/hydrogen exchanger 4 (529 aa).

At 1 to 19 (MSIGLTEFVTNKLAAEHPQ) the chain is on the cytoplasmic side. A helical transmembrane segment spans residues 20 to 40 (VIPISVFIAILCLCLVIGHLL). At 41–45 (EENRW) the chain is on the vacuolar side. Residues 46-66 (VNESITAILVGAASGTVILLI) form a helical membrane-spanning segment. Over 67 to 73 (SKGKSSH) the chain is Cytoplasmic. The helical intramembrane region spans 74–94 (ILVFDEELFFIYLLPPIIFNA). The Cytoplasmic segment spans residues 95–112 (GFQVKKKKFFHNFLTIMS). Residues 113-133 (FGVIGVFISTVIISFGTWWLF) traverse the membrane as a helical segment. Residues 134–171 (PKLGFKGLSARDYLAIGTIFSSTDTVCTLQILHQDETP) lie on the Vacuolar side of the membrane. Residues 172–192 (LLYSLVFGEGVVNDATSVVLF) traverse the membrane as a helical segment. Topologically, residues 193–214 (NAVQKIQFESLTGWTALQVFGN) are cytoplasmic. The helical transmembrane segment at 215 to 235 (FLYLFSTSTLLGIGVGLITSF) threads the bilayer. Residues 236 to 250 (VLKTLYFGRHSTTRE) are Vacuolar-facing. A helical membrane pass occupies residues 251 to 267 (LAIMVLMAYLSYMLAEL). The Cytoplasmic segment spans residues 268–273 (FSLSGI). A helical transmembrane segment spans residues 274-291 (LTVFFCGVLMSHYASYNV). Topologically, residues 292 to 301 (TESSRITSRH) are vacuolar. A helical membrane pass occupies residues 302-322 (VFAMLSFIAETFIFLYVGTDA). Topologically, residues 323–342 (LDFTKWKTSSLSFGGTLGVS) are cytoplasmic. The chain crosses the membrane as a helical span at residues 343–363 (GVITALVLLGRAAFVFPLSVL). At 364-380 (TNFMNRHTERNESITFK) the chain is on the vacuolar side. Residue Asn374 is glycosylated (N-linked (GlcNAc...) asparagine). A helical transmembrane segment spans residues 381-401 (HQVIIWWAGLMRGAVSIALAF). Over 402 to 415 (KQFTYSGVTLDPVN) the chain is Cytoplasmic. The chain crosses the membrane as a helical span at residues 416–436 (AAMVTNTTIVVLFTTLVFGFL). The Vacuolar portion of the chain corresponds to 437 to 529 (TKPLVNYLLP…GPRRENQPEC (93 aa)).

Belongs to the monovalent cation:proton antiporter 1 (CPA1) transporter (TC 2.A.36) family. In terms of tissue distribution, expressed at very low levels in roots and shoots.

It localises to the vacuole membrane. It carries out the reaction Na(+)(in) + H(+)(out) = Na(+)(out) + H(+)(in). It catalyses the reaction K(+)(in) + H(+)(out) = K(+)(out) + H(+)(in). In terms of biological role, may act in low affinity electroneutral exchange of protons for cations such as Na(+) or K(+) across membranes. May also exchange Li(+) and Cs(+) with a lower affinity. This is Sodium/hydrogen exchanger 4 (NHX4) from Arabidopsis thaliana (Mouse-ear cress).